The chain runs to 540 residues: Bifunctional pantoate ligase/cytidylate kinase (540 aa).

Residues 1-280 (MQWLRTVAAL…VGQTRLIDNL (280 aa)) form a pantoate--beta-alanine ligase region. ATP is bound at residue 28–35 (MGSLHEGH). Catalysis depends on His35, which acts as the Proton donor. Residue Gln59 participates in (R)-pantoate binding. Gln59 contributes to the beta-alanine binding site. An ATP-binding site is contributed by 150–153 (GQKD). Gln156 is a binding site for (R)-pantoate. Residues Val179 and 187-190 (YSSR) contribute to the ATP site. The tract at residues 281-540 (LLSPEGVDPL…RSGAAHFDII (260 aa)) is cytidylate kinase. Positions 288–307 (DPLPQEQQSAVPPSPKRGRR) are disordered.

This sequence in the N-terminal section; belongs to the pantothenate synthetase family. In the C-terminal section; belongs to the cytidylate kinase family. Type 1 subfamily.

It is found in the cytoplasm. The enzyme catalyses (R)-pantoate + beta-alanine + ATP = (R)-pantothenate + AMP + diphosphate + H(+). It catalyses the reaction CMP + ATP = CDP + ADP. The catalysed reaction is dCMP + ATP = dCDP + ADP. The protein operates within cofactor biosynthesis; (R)-pantothenate biosynthesis; (R)-pantothenate from (R)-pantoate and beta-alanine: step 1/1. Its function is as follows. Catalyzes the condensation of pantoate with beta-alanine in an ATP-dependent reaction via a pantoyl-adenylate intermediate. In terms of biological role, catalyzes the transfer of a phosphate group from ATP to either CMP or dCMP to form CDP or dCDP and ADP, respectively. The protein is Bifunctional pantoate ligase/cytidylate kinase of Synechococcus sp. (strain JA-3-3Ab) (Cyanobacteria bacterium Yellowstone A-Prime).